The primary structure comprises 463 residues: Lactadherin (463 aa).

Residues 1 to 22 (MQVSRVLAALCGMLLCASGLFA) form the signal peptide. EGF-like domains lie at 24–61 (SGDF…LVCN) and 64–108 (ERGP…IHCE). Cystine bridges form between cysteine 28–cysteine 39, cysteine 33–cysteine 49, and cysteine 51–cysteine 60. The N-linked (GlcNAc...) asparagine glycan is linked to asparagine 61. Intrachain disulfides connect cysteine 68-cysteine 79, cysteine 73-cysteine 96, cysteine 98-cysteine 107, cysteine 148-cysteine 303, cysteine 290-cysteine 294, and cysteine 308-cysteine 463. Positions 87–89 (RGD) match the Cell attachment site motif. F5/8 type C domains lie at 148–303 (CSTQ…LLGC) and 308–463 (CSEP…LLGC). Asparagine 266 carries an N-linked (GlcNAc...) asparagine glycan. 2 N-linked (GlcNAc...) asparagine glycosylation sites follow: asparagine 316 and asparagine 426.

Post-translationally, N-glycosylated. Isoform 1 also exists in both an O-glycosylated and a non-O-glycosylated form. Mammary epithelial cell surfaces and spermatozoan. Isoform 2 is present in brain, heart, kidney and spleen and at low levels in lung, liver, small intestine and testis.

The protein resides in the membrane. It localises to the secreted. Its subcellular location is the cytoplasmic vesicle. The protein localises to the secretory vesicle. It is found in the acrosome membrane. Functionally, contributes to phagocytic removal of apoptotic cells in many tissues. Specific ligand for the alpha-v/beta-3 and alpha-v/beta-5 receptors. Also binds to phosphatidylserine-enriched cell surfaces in a receptor-independent manner. Zona pellucida-binding protein which may play a role in gamete interaction. Plays an important role in the maintenance of intestinal epithelial homeostasis and the promotion of mucosal healing. Promotes VEGF-dependent neovascularization. The chain is Lactadherin (Mfge8) from Mus musculus (Mouse).